Here is a 469-residue protein sequence, read N- to C-terminus: 3-isopropylmalate dehydratase large subunit (469 aa).

The [4Fe-4S] cluster site is built by cysteine 350, cysteine 410, and cysteine 413.

It belongs to the aconitase/IPM isomerase family. LeuC type 1 subfamily. As to quaternary structure, heterodimer of LeuC and LeuD. [4Fe-4S] cluster serves as cofactor.

It carries out the reaction (2R,3S)-3-isopropylmalate = (2S)-2-isopropylmalate. It participates in amino-acid biosynthesis; L-leucine biosynthesis; L-leucine from 3-methyl-2-oxobutanoate: step 2/4. Its function is as follows. Catalyzes the isomerization between 2-isopropylmalate and 3-isopropylmalate, via the formation of 2-isopropylmaleate. In Agrobacterium fabrum (strain C58 / ATCC 33970) (Agrobacterium tumefaciens (strain C58)), this protein is 3-isopropylmalate dehydratase large subunit.